Reading from the N-terminus, the 601-residue chain is Elongation factor 4 (601 aa).

One can recognise a tr-type G domain in the interval 5–187; it reads ENIRNFCIVA…AIITTFPPPK (183 aa). Residues 17–22 and 134–137 contribute to the GTP site; these read DHGKST and NKID.

The protein belongs to the TRAFAC class translation factor GTPase superfamily. Classic translation factor GTPase family. LepA subfamily.

Its subcellular location is the cell inner membrane. The enzyme catalyses GTP + H2O = GDP + phosphate + H(+). Required for accurate and efficient protein synthesis under certain stress conditions. May act as a fidelity factor of the translation reaction, by catalyzing a one-codon backward translocation of tRNAs on improperly translocated ribosomes. Back-translocation proceeds from a post-translocation (POST) complex to a pre-translocation (PRE) complex, thus giving elongation factor G a second chance to translocate the tRNAs correctly. Binds to ribosomes in a GTP-dependent manner. This is Elongation factor 4 from Treponema denticola (strain ATCC 35405 / DSM 14222 / CIP 103919 / JCM 8153 / KCTC 15104).